The chain runs to 21 residues: Major outer membrane protein (21 aa).

Disulfide bond interactions within and between MOMP molecules and other components form high molecular-weight oligomers.

It is found in the cell outer membrane. Functionally, structural rigidity of the outer membrane of elementary bodies and porin forming, permitting diffusion of solutes through the intracellular reticulate body membrane. This is Major outer membrane protein from Actinobacillus equuli.